Consider the following 262-residue polypeptide: ATP synthase subunit a (262 aa).

6 helical membrane passes run 50-70, 107-127, 141-161, 194-214, 218-238, and 239-259; these read TMIM…ACTK, MMPI…LGLI, FGLA…ANGV, LYGN…LINI, VFGG…VGFV, and QAFV…AHEA.

This sequence belongs to the ATPase A chain family. As to quaternary structure, F-type ATPases have 2 components, CF(1) - the catalytic core - and CF(0) - the membrane proton channel. CF(1) has five subunits: alpha(3), beta(3), gamma(1), delta(1), epsilon(1). CF(0) has three main subunits: a(1), b(2) and c(9-12). The alpha and beta chains form an alternating ring which encloses part of the gamma chain. CF(1) is attached to CF(0) by a central stalk formed by the gamma and epsilon chains, while a peripheral stalk is formed by the delta and b chains.

It is found in the cell membrane. Key component of the proton channel; it plays a direct role in the translocation of protons across the membrane. In Desulforamulus reducens (strain ATCC BAA-1160 / DSM 100696 / MI-1) (Desulfotomaculum reducens), this protein is ATP synthase subunit a.